A 212-amino-acid chain; its full sequence is RNA chaperone ProQ (212 aa).

2 stretches are compositionally biased toward basic and acidic residues: residues 102 to 124 (ALKE…EKAK) and 132 to 144 (RKAD…DKPK). Residues 102-149 (ALKESKERVFASRRTNTKEEKAKQPRRPAPRKADAAAKSDKPKAAPKA) are disordered.

It belongs to the ProQ family.

It localises to the cytoplasm. Functionally, RNA chaperone with significant RNA binding, RNA strand exchange and RNA duplexing activities. The protein is RNA chaperone ProQ of Aeromonas hydrophila subsp. hydrophila (strain ATCC 7966 / DSM 30187 / BCRC 13018 / CCUG 14551 / JCM 1027 / KCTC 2358 / NCIMB 9240 / NCTC 8049).